Consider the following 204-residue polypeptide: E2 ubiquitin-conjugating enzyme PEX4 (204 aa).

A UBC core domain is found at 2–196 (SAEKRLLQEY…IEYYVGRYSI (195 aa)). Cysteine 133 functions as the Glycyl thioester intermediate in the catalytic mechanism.

It belongs to the ubiquitin-conjugating enzyme family.

It localises to the peroxisome membrane. It carries out the reaction S-ubiquitinyl-[E1 ubiquitin-activating enzyme]-L-cysteine + [E2 ubiquitin-conjugating enzyme]-L-cysteine = [E1 ubiquitin-activating enzyme]-L-cysteine + S-ubiquitinyl-[E2 ubiquitin-conjugating enzyme]-L-cysteine.. The protein operates within protein modification; protein ubiquitination. In terms of biological role, E2 ubiquitin-conjugating enzyme involved in peroxisome biosynthesis. Acts late in peroxisomal matrix protein import, after matrix protein translocation. Required for both monoubiquitination and polyubiquitination of coreceptor PEX20. polyubiquitination of PEX20 at conserved lysine 'Lys-19' near the N-terminus leads to its and proteasomal degradation, whereas a monoubiquitination at the conserved cysteine 'Cys-8' is essential for its recycling. This is E2 ubiquitin-conjugating enzyme PEX4 from Komagataella phaffii (strain GS115 / ATCC 20864) (Yeast).